The sequence spans 123 residues: Small ribosomal subunit protein eS25 (123 aa).

Residues 1-13 (MPPKKDTKGDSKK) are compositionally biased toward basic and acidic residues. The disordered stretch occupies residues 1–34 (MPPKKDTKGDSKKGQKAKAGSGGGKAKKKKWSKG). The segment covering 25-34 (KAKKKKWSKG) has biased composition (basic residues).

The protein belongs to the eukaryotic ribosomal protein eS25 family.

In Branchiostoma belcheri (Amphioxus), this protein is Small ribosomal subunit protein eS25 (RPS25).